Consider the following 113-residue polypeptide: Mediator of RNA polymerase II transcription subunit 22 (113 aa).

The protein belongs to the Mediator complex subunit 22 family. As to quaternary structure, component of the Mediator complex.

The protein localises to the nucleus. Component of the Mediator complex, a coactivator involved in the regulated transcription of nearly all RNA polymerase II-dependent genes. Mediator functions as a bridge to convey information from gene-specific regulatory proteins to the basal RNA polymerase II transcription machinery. Mediator is recruited to promoters by direct interactions with regulatory proteins and serves as a scaffold for the assembly of a functional preinitiation complex with RNA polymerase II and the general transcription factors. The sequence is that of Mediator of RNA polymerase II transcription subunit 22 (SRB6) from Candida glabrata (strain ATCC 2001 / BCRC 20586 / JCM 3761 / NBRC 0622 / NRRL Y-65 / CBS 138) (Yeast).